The following is a 126-amino-acid chain: MLLGNRPRPQMQRTASITRITIEVDGDQTAGQDSDVSMTVVDGGENYAQRFLSPVNHQRNERKYGGRSSPSSFLVNCGFCKRGLAPGRDIYMYKGDAAFCSIECREQQMEHDEGKTRNRVVLSPSK.

An FLZ-type zinc finger spans residues 72-116 (SFLVNCGFCKRGLAPGRDIYMYKGDAAFCSIECREQQMEHDEGKT).

It belongs to the FLZ family. Interacts with KIN10 and KIN11 via its FLZ-type zinc finger domain. Interacts with KINB3 via its N-terminal part. Forms homodimer and heterodimer with FLZ1, FLZ2 and FLZ15 in vitro.

It is found in the cytoplasm. The protein localises to the nucleus. Functionally, may act as an adapter to facilitate the interaction of SnRK1 complex with effector proteins, conferring tissue- and stimulus-type specific differences in the SnRK1 regulation pathway. This is FCS-Like Zinc finger 7 from Arabidopsis thaliana (Mouse-ear cress).